Here is a 232-residue protein sequence, read N- to C-terminus: Cytidylate kinase (232 aa).

11 to 19 (GPAGAGKST) is an ATP binding site.

This sequence belongs to the cytidylate kinase family. Type 1 subfamily.

The protein localises to the cytoplasm. The enzyme catalyses CMP + ATP = CDP + ADP. It carries out the reaction dCMP + ATP = dCDP + ADP. This Desulfitobacterium hafniense (strain Y51) protein is Cytidylate kinase.